A 124-amino-acid chain; its full sequence is Small ribosomal subunit protein uS12 (124 aa).

Residue aspartate 89 is modified to 3-methylthioaspartic acid.

Belongs to the universal ribosomal protein uS12 family. In terms of assembly, part of the 30S ribosomal subunit. Contacts proteins S8 and S17. May interact with IF1 in the 30S initiation complex.

Its function is as follows. With S4 and S5 plays an important role in translational accuracy. Functionally, interacts with and stabilizes bases of the 16S rRNA that are involved in tRNA selection in the A site and with the mRNA backbone. Located at the interface of the 30S and 50S subunits, it traverses the body of the 30S subunit contacting proteins on the other side and probably holding the rRNA structure together. The combined cluster of proteins S8, S12 and S17 appears to hold together the shoulder and platform of the 30S subunit. The chain is Small ribosomal subunit protein uS12 from Koribacter versatilis (strain Ellin345).